The sequence spans 240 residues: 1-(5-phosphoribosyl)-5-[(5-phosphoribosylamino)methylideneamino] imidazole-4-carboxamide isomerase (240 aa).

Residue D9 is the Proton acceptor of the active site. D131 serves as the catalytic Proton donor.

The protein belongs to the HisA/HisF family.

The protein localises to the cytoplasm. The catalysed reaction is 1-(5-phospho-beta-D-ribosyl)-5-[(5-phospho-beta-D-ribosylamino)methylideneamino]imidazole-4-carboxamide = 5-[(5-phospho-1-deoxy-D-ribulos-1-ylimino)methylamino]-1-(5-phospho-beta-D-ribosyl)imidazole-4-carboxamide. It functions in the pathway amino-acid biosynthesis; L-histidine biosynthesis; L-histidine from 5-phospho-alpha-D-ribose 1-diphosphate: step 4/9. In Cytophaga hutchinsonii (strain ATCC 33406 / DSM 1761 / CIP 103989 / NBRC 15051 / NCIMB 9469 / D465), this protein is 1-(5-phosphoribosyl)-5-[(5-phosphoribosylamino)methylideneamino] imidazole-4-carboxamide isomerase.